A 215-amino-acid chain; its full sequence is C-type lectin domain family 4 member D (215 aa).

At 1–17 (MGLEKPQSKLEGGMHPQ) the chain is on the cytoplasmic side. A helical; Signal-anchor for type II membrane protein membrane pass occupies residues 18 to 38 (LIPSVIAVVFILLLSVCFIAS). At 39-215 (CLVTHHNFSR…ICKIPGTTLN (177 aa)) the chain is on the extracellular side. N45 carries N-linked (GlcNAc...) asparagine glycosylation. The cysteines at positions 84 and 95 are disulfide-linked. The C-type lectin domain occupies 91 to 208 (FQSNCYFPLT…CNFEASRICK (118 aa)). N-linked (GlcNAc...) asparagine glycosylation is found at N102 and N111. 2 cysteine pairs are disulfide-bonded: C112–C207 and C182–C199. Ca(2+)-binding residues include E173, D175, N195, and D196.

Heterodimer with CLEC4E; disulfide-linked. CLEC4E acts as a bridge for interaction between CLEC4D and FCER1G to form a functional complex. Heterodimer with CLEC6A; this heterodimer forms a pattern recognition receptor (PRR) against fungal infection. In terms of tissue distribution, expressed weakly in peripheral blood leukocytes, bone marrow and spleen. Expression is confined mostly in monocytes and macrophage and seems to be up-regulated by IL-6, IL-10, TNF-alpha and IFN-gamma.

The protein localises to the cell membrane. Its function is as follows. Calcium-dependent lectin that acts as a pattern recognition receptor (PRR) of the innate immune system: recognizes damage-associated molecular patterns (DAMPs) of pathogen-associated molecular patterns (PAMPs) of bacteria and fungi. The PAMPs include alpha-mannans on C.albicans hypheas and mycobacterial trehalose 6,6'-dimycolate (TDM). Interacts with signaling adapter Fc receptor gamma chain/FCER1G, likely via CLEC4E, to form a functional complex in myeloid cells. Binding of mycobacterial TDM or C.albicans alpha-mannans to this receptor complex leads to phosphorylation of the immunoreceptor tyrosine-based activation motif (ITAM) of FCER1G, triggering activation of SYK, CARD9 and NF-kappa-B, consequently driving maturation of antigen-presenting cells and shaping antigen-specific priming of T-cells toward effector T-helper 1 and T-helper 17 cell subtypes. The heterodimer formed with CLEC6A is active against fungal infection. Functions as an endocytic receptor. May be involved in antigen uptake at the site of infection, either for clearance of the antigen, or for processing and further presentation to T-cells. The sequence is that of C-type lectin domain family 4 member D from Homo sapiens (Human).